The sequence spans 463 residues: Phosphoglucosamine mutase (463 aa).

S101 (phosphoserine intermediate) is an active-site residue. Residues S101, D256, D258, and D260 each contribute to the Mg(2+) site. At S101 the chain carries Phosphoserine.

The protein belongs to the phosphohexose mutase family. The cofactor is Mg(2+). In terms of processing, activated by phosphorylation.

It catalyses the reaction alpha-D-glucosamine 1-phosphate = D-glucosamine 6-phosphate. In terms of biological role, catalyzes the conversion of glucosamine-6-phosphate to glucosamine-1-phosphate. This chain is Phosphoglucosamine mutase, found in Desulforapulum autotrophicum (strain ATCC 43914 / DSM 3382 / VKM B-1955 / HRM2) (Desulfobacterium autotrophicum).